The primary structure comprises 377 residues: Odorant receptor 30a (377 aa).

The Cytoplasmic segment spans residues Met-1–Arg-34. A helical membrane pass occupies residues Tyr-35–Ser-55. Over Thr-56–Asn-65 the chain is Extracellular. The helical transmembrane segment at Val-66–Arg-86 threads the bilayer. Topologically, residues Phe-87–Arg-127 are cytoplasmic. The helical transmembrane segment at Ile-128–Ser-148 threads the bilayer. Residues Glu-149–Glu-172 are Extracellular-facing. The helical transmembrane segment at Ile-173 to Thr-193 threads the bilayer. Over Asn-194–His-254 the chain is Cytoplasmic. Residues Leu-255–Ala-275 form a helical membrane-spanning segment. Residues Gln-276–Gln-280 lie on the Extracellular side of the membrane. A helical membrane pass occupies residues Thr-281 to Val-301. Topologically, residues Ala-302–Ala-344 are cytoplasmic. A helical membrane pass occupies residues Ile-345–Ile-365. The Extracellular portion of the chain corresponds to Tyr-366–Gly-377.

The protein belongs to the insect chemoreceptor superfamily. Heteromeric odorant receptor channel (TC 1.A.69) family. Or30a subfamily. As to quaternary structure, interacts with Orco. Complexes exist early in the endomembrane system in olfactory sensory neurons (OSNs), coupling these complexes to the conserved ciliary trafficking pathway.

Its subcellular location is the cell membrane. Functionally, odorant receptor which mediates acceptance or avoidance behavior, depending on its substrates. The odorant receptor repertoire encodes a large collection of odor stimuli that vary widely in identity, intensity, and duration. May form a complex with Orco to form odorant-sensing units, providing sensitive and prolonged odorant signaling and calcium permeability. Involved in the behavioral responses to propyl acetate and anisole. In Drosophila melanogaster (Fruit fly), this protein is Odorant receptor 30a (Or30a).